We begin with the raw amino-acid sequence, 753 residues long: Dolichyl-phosphate-mannose--protein mannosyltransferase 3 (753 aa).

Over 1 to 50 the chain is Cytoplasmic; that stretch reads MPYRVATGYSEKSTDDDLIWRTPIVKEELEDADNFLKDDAELYDKVKNES. Residues 51–71 traverse the membrane as a helical segment; it reads AVSHLDTIVMPIIFTVLGMFT. At 72–148 the chain is on the lumenal side; it reads RMYKIGRNNH…IDYVKMRLFQ (77 aa). Asparagine 124 carries an N-linked (GlcNAc...) asparagine glycan. A helical membrane pass occupies residues 149–169; that stretch reads AMFSSLCVPLAYFTGRAIGFS. At 170–174 the chain is on the cytoplasmic side; that stretch reads RLSVW. The chain crosses the membrane as a helical span at residues 175-195; the sequence is LFTILVIFENSYATLGKFILL. Residues 196–235 lie on the Lumenal side of the membrane; sequence DSMLLFFTVSSYFCLAKFHTMRKSPFSARWWLWLCLTGLN. The helical transmembrane segment at 236–256 threads the bilayer; sequence LGCAISVKMVGLFIISVVGIY. The Cytoplasmic portion of the chain corresponds to 257-282; the sequence is TISELWNLLSDRSVSWKVYVNHWLAR. A helical transmembrane segment spans residues 283–303; sequence IFGLIIIPVCVFLLCFKIHFD. Residues 304-602 are Lumenal-facing; it reads LLSNSGPGDS…IKYFLLGSPA (299 aa). N-linked (GlcNAc...) asparagine glycosylation is present at asparagine 324. The MIR 1 domain occupies 332–387; that stretch reads PRDVALGSSIISIKNQALGGALLHSHVQPFPEGSEQQQVTVYGYSDANNEWFFQRI. Asparagine 398 carries N-linked (GlcNAc...) asparagine glycosylation. MIR domains lie at 401-457 and 465-523; these read IEFV…IEIV and PTLL…IETH. A helical transmembrane segment spans residues 603–623; the sequence is SVWPSSIAVCALIIHVIFLTL. Over 624–639 the chain is Cytoplasmic; that stretch reads KWQRQCVILSDPVERD. A helical membrane pass occupies residues 640 to 660; sequence VFVMAAFYPLLAWLLHYMPFV. Over 661–665 the chain is Lumenal; the sequence is VMSRV. A helical membrane pass occupies residues 666 to 686; sequence VYAHHYLPTLYFALMILSYYF. Residues 687 to 703 lie on the Cytoplasmic side of the membrane; that stretch reads DMITKRWATRNTGKFLR. Residues 704–724 form a helical membrane-spanning segment; that stretch reads LGAYIVYGSIVIAGFFYFSPF. At 725–753 the chain is on the lumenal side; the sequence is SFGMDGPVDDYAYLAWLPTWQIVEDIRNT.

The protein belongs to the glycosyltransferase 39 family. In terms of assembly, PMT3 and PMT5 form a functional heterodimer. Also forms a minor complex with PMT1.

It is found in the endoplasmic reticulum membrane. It carries out the reaction a di-trans,poly-cis-dolichyl beta-D-mannosyl phosphate + L-seryl-[protein] = 3-O-(alpha-D-mannosyl)-L-seryl-[protein] + a di-trans,poly-cis-dolichyl phosphate + H(+). It catalyses the reaction a di-trans,poly-cis-dolichyl beta-D-mannosyl phosphate + L-threonyl-[protein] = 3-O-(alpha-D-mannosyl)-L-threonyl-[protein] + a di-trans,poly-cis-dolichyl phosphate + H(+). It participates in protein modification; protein glycosylation. In terms of biological role, protein O-mannosyltransferase involved in O-glycosylation which is essential for cell wall rigidity. Forms a heterodimeric complex with PMT5 and more rarely with PMT1 to transfer mannose from Dol-P-mannose to Ser or Thr residues on proteins. Seems to have redundant activity to PMT2. The chain is Dolichyl-phosphate-mannose--protein mannosyltransferase 3 from Saccharomyces cerevisiae (strain ATCC 204508 / S288c) (Baker's yeast).